Consider the following 222-residue polypeptide: Probable transaldolase (222 aa).

The active-site Schiff-base intermediate with substrate is the lysine 91.

Belongs to the transaldolase family. Type 3B subfamily.

It is found in the cytoplasm. It catalyses the reaction D-sedoheptulose 7-phosphate + D-glyceraldehyde 3-phosphate = D-erythrose 4-phosphate + beta-D-fructose 6-phosphate. It participates in carbohydrate degradation; pentose phosphate pathway; D-glyceraldehyde 3-phosphate and beta-D-fructose 6-phosphate from D-ribose 5-phosphate and D-xylulose 5-phosphate (non-oxidative stage): step 2/3. In terms of biological role, transaldolase is important for the balance of metabolites in the pentose-phosphate pathway. The chain is Probable transaldolase from Chlorobium phaeovibrioides (strain DSM 265 / 1930) (Prosthecochloris vibrioformis (strain DSM 265)).